The sequence spans 2410 residues: Dual specificity protein kinase splA (2410 aa).

Disordered stretches follow at residues 29–48 (NNNN…NNNN), 66–103 (NHPS…GELT), 116–158 (NTQT…SNGG), 187–252 (NISP…SSGI), 508–647 (QQLQ…VPSA), and 659–820 (SSSS…KKEG). Low complexity-rich tracts occupy residues 116–128 (NTQT…TSPN) and 137–158 (NTTT…SNGG). Residues 514–525 (QPPPTIQPPPQQ) are compositionally biased toward pro residues. The span at 530-544 (LRGNRSSGNLSGLNS) shows a compositional bias: low complexity. Over residues 545-554 (FSLKQSTDSL) the composition is skewed to polar residues. A compositionally biased stretch (low complexity) spans 560-583 (SQQSTVSSNSTPIAATPISPLTAP). The span at 584-594 (TSPPPPPPPPT) shows a compositional bias: pro residues. Composition is skewed to low complexity over residues 595–618 (NFNS…NTTV), 627–639 (VLPK…SPRP), 659–686 (SSSS…LNIS), 701–738 (SPSY…SPSV), 746–759 (ISPN…PNIS), and 777–813 (NTNN…NNTN). B30.2/SPRY domains lie at 822-1004 (SSWF…GPFS) and 1020-1209 (DSGG…PPFK). 2 disordered regions span residues 1228-1428 (PNGN…NNIY) and 1493-1512 (SLGV…PRKI). Composition is skewed to low complexity over residues 1229 to 1359 (NGNN…NNNI), 1373 to 1399 (SSTG…NNSS), 1419 to 1428 (SSTNNNNNIY), and 1493 to 1507 (SLGV…SPKT). A B30.2/SPRY 3 domain is found at 1481–1703 (PITASTNHTL…CVATFPGGHF (223 aa)). Residues 1734–1798 (WAPNDVAIWL…INRLNRMIQI (65 aa)) enclose the SAM domain. The interval 1862–2105 (KSYTQKEIED…PPPPPQLPVR (244 aa)) is disordered. Positions 1865 to 1874 (TQKEIEDRNR) are enriched in basic and acidic residues. Over residues 1951–1967 (SVSSTGGSSGFLTFPSS) the composition is skewed to low complexity. Residues 1989 to 2002 (ITSNYKGITNTGQP) show a composition bias toward polar residues. Low complexity predominate over residues 2020–2070 (SNNGNNGNNNNNNNNNNIKANQQQQQQSSYQQSQTQQQQQHITSTSTSTTN). A compositionally biased stretch (pro residues) spans 2089–2102 (PSRPPPPPPPPPQL). The region spanning 2115–2387 (LEFGQTIGKG…FKQIIVHLKE (273 aa)) is the Protein kinase domain. Residues 2121-2129 (IGKGFFGEV) and Lys2142 each bind ATP. Asp2243 functions as the Proton acceptor in the catalytic mechanism.

This sequence belongs to the protein kinase superfamily. TKL Tyr protein kinase family. Post-translationally, tyrosine kinase domain is capable of autophosphorylation, in vitro; however it is also autophosphorylated on serine and threonine residues.

It carries out the reaction L-tyrosyl-[protein] + ATP = O-phospho-L-tyrosyl-[protein] + ADP + H(+). Its function is as follows. Essential for spore differentiation. This Dictyostelium discoideum (Social amoeba) protein is Dual specificity protein kinase splA (splA).